We begin with the raw amino-acid sequence, 576 residues long: Sulfite reductase [NADPH] hemoprotein beta-component (576 aa).

Positions 439, 445, 485, and 489 each coordinate [4Fe-4S] cluster. Cys489 provides a ligand contact to siroheme.

The protein belongs to the nitrite and sulfite reductase 4Fe-4S domain family. In terms of assembly, alpha(8)-beta(8). The alpha component is a flavoprotein, the beta component is a hemoprotein. The cofactor is siroheme. [4Fe-4S] cluster serves as cofactor.

It carries out the reaction hydrogen sulfide + 3 NADP(+) + 3 H2O = sulfite + 3 NADPH + 4 H(+). It functions in the pathway sulfur metabolism; hydrogen sulfide biosynthesis; hydrogen sulfide from sulfite (NADPH route): step 1/1. Its function is as follows. Component of the sulfite reductase complex that catalyzes the 6-electron reduction of sulfite to sulfide. This is one of several activities required for the biosynthesis of L-cysteine from sulfate. This chain is Sulfite reductase [NADPH] hemoprotein beta-component, found in Aliivibrio fischeri (strain ATCC 700601 / ES114) (Vibrio fischeri).